We begin with the raw amino-acid sequence, 424 residues long: CinA-like protein (424 aa).

This sequence belongs to the CinA family.

This Prochlorococcus marinus (strain MIT 9301) protein is CinA-like protein.